The primary structure comprises 328 residues: MLHKLLIVVFLVVCLHDMRLNGQKKKETLLSEKVSQMMEWVSKRAVVRLNGEKFKRLVRAHPRNYSVIVMFTALQPQRQCGVCRQADEEYQILANSWRYSSAFTNRIFFAMVDFDEGSDVFQMLNMNSAPTFINFPAKGKPKRADTYELQVRGFAAEQLARWVADRTDVHIRVIRPPNYAGPLMLGLLLAFIGSLAYLRRNNLEFLFNKNVWAFSALCFVLIMTSGQMWNHIRGPPYAHKNPNTGQVSYIHGSSQAQFVAETHIVLLFNAAVTIGMVLLHEAATSGLDIVKRKIMCVAGIGLVVLFFSWLLSVFRAKYHGYPYSFLFG.

The first 22 residues, 1 to 22 (MLHKLLIVVFLVVCLHDMRLNG), serve as a signal peptide directing secretion. Residues 23-177 (QKKKETLLSE…DVHIRVIRPP (155 aa)) lie on the Extracellular side of the membrane. The region spanning 40–168 (WVSKRAVVRL…LARWVADRTD (129 aa)) is the Thioredoxin domain. Asparagine 64 is a glycosylation site (N-linked (GlcNAc...) asparagine). Cysteine 80 and cysteine 83 form a disulfide bridge. Residues 178–198 (NYAGPLMLGLLLAFIGSLAYL) form a helical membrane-spanning segment. Residues 199–202 (RRNN) lie on the Cytoplasmic side of the membrane. Residues 203-223 (LEFLFNKNVWAFSALCFVLIM) form a helical membrane-spanning segment. The Extracellular portion of the chain corresponds to 224–257 (TSGQMWNHIRGPPYAHKNPNTGQVSYIHGSSQAQ). A helical membrane pass occupies residues 258 to 278 (FVAETHIVLLFNAAVTIGMVL). The Cytoplasmic portion of the chain corresponds to 279–293 (LHEAATSGLDIVKRK). Residues 294-314 (IMCVAGIGLVVLFFSWLLSVF) traverse the membrane as a helical segment. Residues 315–328 (RAKYHGYPYSFLFG) are Extracellular-facing.

This sequence belongs to the OST3/OST6 family. Accessory component of the STT3B-containing form of the oligosaccharyltransferase (OST) complex.

The protein resides in the cell membrane. The protein localises to the endoplasmic reticulum. It is found in the endoplasmic reticulum membrane. It functions in the pathway protein modification; protein glycosylation. In terms of biological role, accessory component of the STT3B-containing form of the N-oligosaccharyl transferase (OST) complex which catalyzes the transfer of a high mannose oligosaccharide from a lipid-linked oligosaccharide donor to an asparagine residue within an Asn-X-Ser/Thr consensus motif in nascent polypeptide chains. Involved in N-glycosylation of STT3B-dependent substrates. Specifically required for the glycosylation of a subset of acceptor sites that are near cysteine residues; in this function seems to act redundantly with TUSC3. In its oxidized form proposed to form transient mixed disulfides with a glycoprotein substrate to facilitate access of STT3B to the unmodified acceptor site. Also has oxidoreductase-independent functions in the STT3B-containing OST complex possibly involving substrate recognition. Could indirectly play a role in Mg(2+) transport. In Danio rerio (Zebrafish), this protein is Dolichyl-diphosphooligosaccharide--protein glycosyltransferase subunit MAGT1.